An 80-amino-acid polypeptide reads, in one-letter code: Exodeoxyribonuclease 7 small subunit (80 aa).

This sequence belongs to the XseB family. Heterooligomer composed of large and small subunits.

The protein resides in the cytoplasm. It carries out the reaction Exonucleolytic cleavage in either 5'- to 3'- or 3'- to 5'-direction to yield nucleoside 5'-phosphates.. Functionally, bidirectionally degrades single-stranded DNA into large acid-insoluble oligonucleotides, which are then degraded further into small acid-soluble oligonucleotides. In Escherichia coli O139:H28 (strain E24377A / ETEC), this protein is Exodeoxyribonuclease 7 small subunit.